The sequence spans 94 residues: Co-chaperonin GroES (94 aa).

The protein belongs to the GroES chaperonin family. In terms of assembly, heptamer of 7 subunits arranged in a ring. Interacts with the chaperonin GroEL.

Its subcellular location is the cytoplasm. Together with the chaperonin GroEL, plays an essential role in assisting protein folding. The GroEL-GroES system forms a nano-cage that allows encapsulation of the non-native substrate proteins and provides a physical environment optimized to promote and accelerate protein folding. GroES binds to the apical surface of the GroEL ring, thereby capping the opening of the GroEL channel. The protein is Co-chaperonin GroES of Clostridium beijerinckii (strain ATCC 51743 / NCIMB 8052) (Clostridium acetobutylicum).